A 427-amino-acid chain; its full sequence is Enolase (427 aa).

Glutamine 162 is a binding site for (2R)-2-phosphoglycerate. Glutamate 204 functions as the Proton donor in the catalytic mechanism. The Mg(2+) site is built by aspartate 241, glutamate 282, and aspartate 309. Lysine 334, arginine 363, serine 364, and lysine 385 together coordinate (2R)-2-phosphoglycerate. The Proton acceptor role is filled by lysine 334.

This sequence belongs to the enolase family. It depends on Mg(2+) as a cofactor.

The protein localises to the cytoplasm. It is found in the secreted. It localises to the cell surface. It catalyses the reaction (2R)-2-phosphoglycerate = phosphoenolpyruvate + H2O. It functions in the pathway carbohydrate degradation; glycolysis; pyruvate from D-glyceraldehyde 3-phosphate: step 4/5. Catalyzes the reversible conversion of 2-phosphoglycerate (2-PG) into phosphoenolpyruvate (PEP). It is essential for the degradation of carbohydrates via glycolysis. The chain is Enolase from Parafrankia sp. (strain EAN1pec).